We begin with the raw amino-acid sequence, 591 residues long: L-fucose isomerase (591 aa).

Active-site proton acceptor residues include Glu337 and Asp361. Positions 337, 361, and 528 each coordinate Mn(2+).

Belongs to the L-fucose isomerase family. In terms of assembly, homohexamer. Requires Mn(2+) as cofactor.

It localises to the cytoplasm. The enzyme catalyses L-fucose = L-fuculose. It participates in carbohydrate degradation; L-fucose degradation; L-lactaldehyde and glycerone phosphate from L-fucose: step 1/3. Converts the aldose L-fucose into the corresponding ketose L-fuculose. This chain is L-fucose isomerase, found in Salmonella arizonae (strain ATCC BAA-731 / CDC346-86 / RSK2980).